Reading from the N-terminus, the 74-residue chain is DUP240 protein DFP2 (74 aa).

This sequence belongs to the DUP/COS family.

It localises to the cytoplasm. The protein resides in the membrane. The chain is DUP240 protein DFP2 from Saccharomyces cerevisiae (strain ATCC 204508 / S288c) (Baker's yeast).